A 298-amino-acid chain; its full sequence is N-acetylmuramic acid 6-phosphate etherase (298 aa).

In terms of domain architecture, SIS spans 55 to 218 (IHAQVSGGGR…STGLMIKSGK (164 aa)). The active-site Proton donor is glutamate 83. Glutamate 114 is an active-site residue.

The protein belongs to the GCKR-like family. MurNAc-6-P etherase subfamily. In terms of assembly, homodimer.

The enzyme catalyses N-acetyl-D-muramate 6-phosphate + H2O = N-acetyl-D-glucosamine 6-phosphate + (R)-lactate. Its pathway is amino-sugar metabolism; 1,6-anhydro-N-acetylmuramate degradation. It participates in amino-sugar metabolism; N-acetylmuramate degradation. It functions in the pathway cell wall biogenesis; peptidoglycan recycling. In terms of biological role, specifically catalyzes the cleavage of the D-lactyl ether substituent of MurNAc 6-phosphate, producing GlcNAc 6-phosphate and D-lactate. Together with AnmK, is also required for the utilization of anhydro-N-acetylmuramic acid (anhMurNAc) either imported from the medium or derived from its own cell wall murein, and thus plays a role in cell wall recycling. The polypeptide is N-acetylmuramic acid 6-phosphate etherase (Escherichia coli O7:K1 (strain IAI39 / ExPEC)).